The primary structure comprises 307 residues: Agmatinase (307 aa).

Mn(2+)-binding residues include H128, D151, H153, D155, D232, and D234.

The protein belongs to the arginase family. Agmatinase subfamily. Mn(2+) serves as cofactor.

It carries out the reaction agmatine + H2O = urea + putrescine. Its pathway is amine and polyamine biosynthesis; putrescine biosynthesis via agmatine pathway; putrescine from agmatine: step 1/1. Its function is as follows. Catalyzes the formation of putrescine from agmatine. The chain is Agmatinase from Neisseria gonorrhoeae (strain ATCC 700825 / FA 1090).